Reading from the N-terminus, the 405-residue chain is Homocitrate synthase AksA (405 aa).

The region spanning 23 to 274 (IEICDVTLRD…IERYDTTKLT (252 aa)) is the Pyruvate carboxyltransferase domain.

It belongs to the alpha-IPM synthase/homocitrate synthase family.

The enzyme catalyses acetyl-CoA + 2-oxoglutarate + H2O = (2R)-homocitrate + CoA + H(+). The catalysed reaction is 2-oxoadipate + acetyl-CoA + H2O = (R)-dihomocitrate + CoA + H(+). It catalyses the reaction 2-oxoheptanedioate + acetyl-CoA + H2O = (R)-trihomocitrate + CoA + H(+). It participates in organic acid metabolism; 2-oxosuberate biosynthesis. Its function is as follows. Catalyzes the condensation of alpha-ketoglutarate and acetyl-CoA to form (R)-homocitrate. Can also catalyze the condensation of alpha-ketoadipate with acetyl-CoA to form (R)-homo(2)citrate, and the condensation of alpha-ketopimelate with acetyl-CoA to form (R)-homo(3)citrate. These reactions are part of the biosynthesis pathway of coenzyme B and biotin. The sequence is that of Homocitrate synthase AksA (aksA) from Methanosarcina acetivorans (strain ATCC 35395 / DSM 2834 / JCM 12185 / C2A).